Here is a 322-residue protein sequence, read N- to C-terminus: tRNA uridine(34) hydroxylase (322 aa).

The 95-residue stretch at 125-219 (QSPDTVVIDA…YGKDPEVQGK (95 aa)) folds into the Rhodanese domain. Cys179 acts as the Cysteine persulfide intermediate in catalysis.

This sequence belongs to the TrhO family.

The enzyme catalyses uridine(34) in tRNA + AH2 + O2 = 5-hydroxyuridine(34) in tRNA + A + H2O. Functionally, catalyzes oxygen-dependent 5-hydroxyuridine (ho5U) modification at position 34 in tRNAs. The protein is tRNA uridine(34) hydroxylase of Bacillus pumilus (strain SAFR-032).